Consider the following 432-residue polypeptide: Ornithine aminotransferase, mitochondrial (432 aa).

Lys-287 carries the N6-(pyridoxal phosphate)lysine modification.

It belongs to the class-III pyridoxal-phosphate-dependent aminotransferase family. In terms of assembly, homotetramer. Pyridoxal 5'-phosphate is required as a cofactor.

The protein resides in the mitochondrion matrix. It catalyses the reaction a 2-oxocarboxylate + L-ornithine = L-glutamate 5-semialdehyde + an L-alpha-amino acid. It participates in amino-acid biosynthesis; L-proline biosynthesis; L-glutamate 5-semialdehyde from L-ornithine: step 1/1. This Drosophila ananassae (Fruit fly) protein is Ornithine aminotransferase, mitochondrial (Oat).